Consider the following 317-residue polypeptide: Terpene synthase 3 (317 aa).

Residues 96–101 (DDFYFE) carry the DDxx(x)D/E motif motif. The NDxxSxxxD/E motif signature appears at 223-231 (NDMVSFERE).

Belongs to the terpene synthase family.

In terms of biological role, terpene synthase that converts its substrate farnesyl diphosphate (FPP) into the sesquiterpene CAS 137235-51-9 as a major product. Is also able to convert FPP into 9-epi-(E)-caryophyllene, alpha-neoclovene, beta-neoclovene, and 3 yet unidentified sesquiterpenes. The protein is Terpene synthase 3 of Dictyostelium purpureum (Slime mold).